Reading from the N-terminus, the 304-residue chain is Release factor glutamine methyltransferase (304 aa).

Residues aspartate 144 and asparagine 188 each contribute to the S-adenosyl-L-methionine site. Residue 188–191 (NPPY) participates in substrate binding.

The protein belongs to the protein N5-glutamine methyltransferase family. PrmC subfamily.

The catalysed reaction is L-glutaminyl-[peptide chain release factor] + S-adenosyl-L-methionine = N(5)-methyl-L-glutaminyl-[peptide chain release factor] + S-adenosyl-L-homocysteine + H(+). Its function is as follows. Methylates the class 1 translation termination release factors RF1/PrfA and RF2/PrfB on the glutamine residue of the universally conserved GGQ motif. The chain is Release factor glutamine methyltransferase from Mycobacterium tuberculosis (strain ATCC 25618 / H37Rv).